We begin with the raw amino-acid sequence, 464 residues long: MEYLPLFHNLRGSRVLVVGGGEIALRKSRLLADAGAQLRVVAPEIEAQLQELIVASGGESLLRGYVEADLDGCTLIIAATDDESLNAQVSADAHRRCVPVNVVDAPALCSVIFPAIVDRSPLVIAVSSGGDAPVLARLIRAKLETWIPSTYGQLAGLAARFRAQVKGLFPDVQQRRAFWEDVFQGPIADRQLAGQGAEAERLLQAKIAGKAPHAPGEVYLVGAGPGDPDLLTFRALRLMQQADVVLYDRLVAPAILELCRRDAERIYVGKRRADHAVPQEQINQQLVTLAQQGKRVVRLKGGDPFIFGRGGEEIEELAAHGIPFQVVPGITAASGCSAYAGIPLTHRDYAQSVRFVTGHLKDGTSNLPWSDLVAPAQTLVFYMGLVGLPTICEQLIKHGRGADTPAALVQQGTTSNQRVFTGTLGNLPALVAEHEVHAPTLVIVGEVVQLREKLAWFEGAQSEV.

The tract at residues 1–203 (MEYLPLFHNL…GQGAEAERLL (203 aa)) is precorrin-2 dehydrogenase /sirohydrochlorin ferrochelatase. NAD(+) is bound by residues 22–23 (EI) and 43–44 (PE). Ser128 is modified (phosphoserine). The tract at residues 216 to 464 (GEVYLVGAGP…AWFEGAQSEV (249 aa)) is uroporphyrinogen-III C-methyltransferase. Position 225 (Pro225) interacts with S-adenosyl-L-methionine. Asp248 acts as the Proton acceptor in catalysis. The Proton donor role is filled by Lys270. Residues 301-303 (GGD), Ile306, 331-332 (TA), Met383, and Gly412 each bind S-adenosyl-L-methionine.

In the N-terminal section; belongs to the precorrin-2 dehydrogenase / sirohydrochlorin ferrochelatase family. The protein in the C-terminal section; belongs to the precorrin methyltransferase family.

It catalyses the reaction uroporphyrinogen III + 2 S-adenosyl-L-methionine = precorrin-2 + 2 S-adenosyl-L-homocysteine + H(+). The catalysed reaction is precorrin-2 + NAD(+) = sirohydrochlorin + NADH + 2 H(+). It carries out the reaction siroheme + 2 H(+) = sirohydrochlorin + Fe(2+). It participates in cofactor biosynthesis; adenosylcobalamin biosynthesis; precorrin-2 from uroporphyrinogen III: step 1/1. Its pathway is cofactor biosynthesis; adenosylcobalamin biosynthesis; sirohydrochlorin from precorrin-2: step 1/1. The protein operates within porphyrin-containing compound metabolism; siroheme biosynthesis; precorrin-2 from uroporphyrinogen III: step 1/1. It functions in the pathway porphyrin-containing compound metabolism; siroheme biosynthesis; siroheme from sirohydrochlorin: step 1/1. It participates in porphyrin-containing compound metabolism; siroheme biosynthesis; sirohydrochlorin from precorrin-2: step 1/1. Multifunctional enzyme that catalyzes the SAM-dependent methylations of uroporphyrinogen III at position C-2 and C-7 to form precorrin-2 via precorrin-1. Then it catalyzes the NAD-dependent ring dehydrogenation of precorrin-2 to yield sirohydrochlorin. Finally, it catalyzes the ferrochelation of sirohydrochlorin to yield siroheme. The protein is Siroheme synthase of Pseudomonas fluorescens (strain ATCC BAA-477 / NRRL B-23932 / Pf-5).